The sequence spans 471 residues: Putative multidrug resistance protein MdtD (471 aa).

Over 1–11 the chain is Periplasmic; sequence MTDLPDSTRWQ. Residues 12 to 32 traverse the membrane as a helical segment; it reads LWIVAFGFFMQSLDTTIVNTA. Residues 33–48 lie on the Cytoplasmic side of the membrane; sequence LPSMAQSLGESPLHMH. A helical membrane pass occupies residues 49-69; sequence MVIVSYVLTVAVMLPASGWLA. Residues 70–76 are Periplasmic-facing; sequence DKVGVRN. The helical transmembrane segment at 77-97 threads the bilayer; sequence IFFTAIVLFTLGSLFCALSGT. The Cytoplasmic portion of the chain corresponds to 98 to 101; sequence LNEL. The helical transmembrane segment at 102–124 threads the bilayer; sequence LLARALQGVGGAMMVPVGRLTVM. Over 125–137 the chain is Periplasmic; sequence KIVPREQYMAAMT. Residues 138 to 158 form a helical membrane-spanning segment; it reads FVTLPGQVGPLLGPALGGLLV. The Cytoplasmic segment spans residues 159–164; the sequence is EYASWH. Residues 165-185 traverse the membrane as a helical segment; it reads WIFLINIPVGIIGAIATLMLM. Over 186–196 the chain is Periplasmic; sequence PNYTMQTRRFD. A helical membrane pass occupies residues 197–217; it reads LSGFLLLAVGMAVLTLALDGS. Topologically, residues 218-224 are cytoplasmic; that stretch reads KGTGLSP. A helical membrane pass occupies residues 225–245; sequence LTIAGLVAVGVVALVLYLLHA. Residues 246-262 are Periplasmic-facing; that stretch reads RNNNRALFSLKLFRTRT. The chain crosses the membrane as a helical span at residues 263–283; that stretch reads FSLGLAGSFAGRIGSGMLPFM. The Cytoplasmic portion of the chain corresponds to 284–285; it reads TP. The helical transmembrane segment at 286 to 306 threads the bilayer; sequence VFLQIGLGFSPFHAGLMMIPM. Topologically, residues 307 to 341 are periplasmic; sequence VLGSMGMKRIVVQVVNCFGYRRVLVATTLGLSLVT. A helical membrane pass occupies residues 342-362; that stretch reads LLFMTTALLGWYYVLPFVLFL. The Cytoplasmic segment spans residues 363–395; it reads QGMVNSTRFSSMNTLTLKDLPDNLASSGNSLLS. A helical membrane pass occupies residues 396–416; sequence MIMQLSMSIGVTIAGLLLGLF. Residues 417–430 are Periplasmic-facing; it reads GSQHVSVDSGTTQT. A helical membrane pass occupies residues 431–451; it reads VFMYTWLSMALIIALPAFIFA. Residues 452-471 lie on the Cytoplasmic side of the membrane; it reads RVPNDTHQNVAISRRKRSAQ.

The protein belongs to the major facilitator superfamily. TCR/Tet family.

Its subcellular location is the cell inner membrane. This chain is Putative multidrug resistance protein MdtD, found in Escherichia coli O139:H28 (strain E24377A / ETEC).